The chain runs to 635 residues: Glutamine--fructose-6-phosphate aminotransferase [isomerizing] (635 aa).

The Nucleophile; for GATase activity role is filled by cysteine 2. The Glutamine amidotransferase type-2 domain occupies 2 to 218 (CGIVGMVAGR…EGDIADVHRD (217 aa)). 2 SIS domains span residues 299-439 (FERL…AKKI) and 472-625 (CARH…IDQP). The active-site For Fru-6P isomerization activity is the lysine 630.

Homodimer.

It is found in the cytoplasm. The catalysed reaction is D-fructose 6-phosphate + L-glutamine = D-glucosamine 6-phosphate + L-glutamate. In terms of biological role, catalyzes the first step in hexosamine metabolism, converting fructose-6P into glucosamine-6P using glutamine as a nitrogen source. The chain is Glutamine--fructose-6-phosphate aminotransferase [isomerizing] from Treponema pallidum (strain Nichols).